We begin with the raw amino-acid sequence, 94 residues long: MNDQRDQAVPWATGLAVAGFVAAVIAVAVVVLSLGLIRVHPLLAVGLNIVAVSGLAPTLWGWRRTPVLRWFVLGAAVGVAGAWLALLALTLGDG.

A signal peptide spans 1–26; the sequence is MNDQRDQAVPWATGLAVAGFVAAVIA. Helical transmembrane passes span 42–62 and 71–91; these read LLAV…LWGW and FVLG…ALTL.

It localises to the cell membrane. This is an uncharacterized protein from Mycobacterium tuberculosis (strain CDC 1551 / Oshkosh).